We begin with the raw amino-acid sequence, 242 residues long: Small ribosomal subunit protein uS2 (242 aa).

It belongs to the universal ribosomal protein uS2 family.

The sequence is that of Small ribosomal subunit protein uS2 from Shewanella oneidensis (strain ATCC 700550 / JCM 31522 / CIP 106686 / LMG 19005 / NCIMB 14063 / MR-1).